The sequence spans 1374 residues: DNA-directed RNA polymerase subunit beta' (1374 aa).

Positions 1–47 are disordered; sequence MTSTSPKSRKPSTKTTKSKSKSKSKSKAAKAAAAGASPALARTPPQF. Positions 7 to 28 are enriched in basic residues; it reads KSRKPSTKTTKSKSKSKSKSKA. Over residues 29–39 the composition is skewed to low complexity; that stretch reads AKAAAAGASPA. The Zn(2+) site is built by cysteine 258, cysteine 325, cysteine 332, and cysteine 335. The segment at 1344-1374 is disordered; sequence RPTGENELEEEQLPDPSALEGLQQEGLLTEE. The segment covering 1362–1374 has biased composition (low complexity); that stretch reads LEGLQQEGLLTEE.

The protein belongs to the RNA polymerase beta' chain family. RpoC2 subfamily. In terms of assembly, in cyanobacteria the RNAP catalytic core is composed of 2 alpha, 1 beta, 1 beta', 1 gamma and 1 omega subunit. When a sigma factor is associated with the core the holoenzyme is formed, which can initiate transcription. The cofactor is Zn(2+).

The catalysed reaction is RNA(n) + a ribonucleoside 5'-triphosphate = RNA(n+1) + diphosphate. In terms of biological role, DNA-dependent RNA polymerase catalyzes the transcription of DNA into RNA using the four ribonucleoside triphosphates as substrates. The polypeptide is DNA-directed RNA polymerase subunit beta' (Prochlorococcus marinus (strain MIT 9313)).